The following is a 200-amino-acid chain: Recombination protein RecR (200 aa).

A C4-type zinc finger spans residues 60–75 (CVYCQALTEDDVCNIC). The region spanning 83-177 (TKLCIIESML…KISRIGFGVP (95 aa)) is the Toprim domain.

The protein belongs to the RecR family.

Functionally, may play a role in DNA repair. It seems to be involved in an RecBC-independent recombinational process of DNA repair. It may act with RecF and RecO. The protein is Recombination protein RecR of Francisella tularensis subsp. novicida (strain U112).